The chain runs to 314 residues: Olfactory receptor 52H1 (314 aa).

At 1–32 (MIIFNLSSYNPGPFILVGIPGLEQFHVWIGIP) the chain is on the extracellular side. Asparagine 5 carries N-linked (GlcNAc...) asparagine glycosylation. Residues 33–53 (FCIIYIVAVVGNCILLYLIVV) form a helical membrane-spanning segment. The Cytoplasmic segment spans residues 54–59 (EHSLHE). Residues 60-80 (PMFFFLSMLAMTDLILSTAGV) traverse the membrane as a helical segment. Topologically, residues 81-101 (PKALSIFWLGAREITFPGCLT) are extracellular. Cysteine 99 and cysteine 181 are disulfide-bonded. A helical membrane pass occupies residues 102-122 (QMFFLHYNFVLDSAILMAMAF). Residues 123–149 (DHYVAICSPLRYTTILTPKTIIKSAMG) lie on the Cytoplasmic side of the membrane. Residues 150–170 (ISFRSFCIILPDVFLLTCLPF) form a helical membrane-spanning segment. The Extracellular segment spans residues 171 to 197 (CRTRIIPHTYCEHIGVAQLACADISIN). Residues 198–218 (FWYGFCVPIMTVISDVILIAV) form a helical membrane-spanning segment. Topologically, residues 219–242 (SYAHILCAVFGLPSQDACQKALGT) are cytoplasmic. The helical transmembrane segment at 243 to 263 (CGSHVCVILMFYTPAFFSILA) threads the bilayer. Topologically, residues 264 to 275 (HRFGHNVSRTFH) are extracellular. N-linked (GlcNAc...) asparagine glycosylation occurs at asparagine 269. A helical transmembrane segment spans residues 276–296 (IMFANLYIVIPPALNPMVYGV). Residues 297–314 (KTKQIRDKVILLFSKGTG) are Cytoplasmic-facing.

Belongs to the G-protein coupled receptor 1 family.

The protein localises to the membrane. Functionally, odorant receptor. In Homo sapiens (Human), this protein is Olfactory receptor 52H1 (OR52H1).